Here is a 150-residue protein sequence, read N- to C-terminus: Protein Turandot X1/X2 (150 aa).

An N-terminal signal peptide occupies residues 1–22 (MRLYIGSLLICVLLGIVPFATA). Residues 127-150 (REEGQSNHANSPTTSPSRIQKMTK) are disordered. Over residues 132–150 (SNHANSPTTSPSRIQKMTK) the composition is skewed to polar residues.

This sequence belongs to the Turandot family.

It localises to the secreted. A humoral factor that may play a role in stress tolerance. This is Protein Turandot X1/X2 from Drosophila sechellia (Fruit fly).